Consider the following 686-residue polypeptide: MSSPASKPASLLDASLLKPAMVDSLRKLHPRDVARNPVMFVVWAGSLLTTVLVVKDLVAPRPDAAPLGFTVQVTLWLWFTVLFANFAEAVAEGRGKAQAGALRKMRKETTARRWKDGREERVPAPDLRKGDEVICEAGDLIPGDGEVVEGIASVDESAITGESAPVIRESGGDRSAVTGGTKVLSDRIRVRISANPGDSFLDRMIGLVEGAARQKTPNEVALHILLVGLTLIFLLACVTLVPLALYSGVPLSGTAVVALLVCLIPTTIGGLLSAIGIAGMDRLLRKNVLAMSGRAVEAAGDVDTLLLDKTGTITLGNRMATELLPMPGVRMEELAEAAQLASLADETPEGRSIVTLVKDTYKMRPRELQAHHATFVPFTAQTRMSGCDLVDPHPRSIRKGAVDAIVTYVRSQGGAVPDELAQASGRIGDAGGTPLAVADGARLLGIIHLKDVVKGGIKERFDRFRAMGIRTVMITGDNPRTAAAIAREAGVDDFLAEATPEAKLALIRTEQGRGKLVAMTGDGTNDAPALAQADVGVAMNTGTQAAKEAGNMVDLDSNPTKLLEVVEVGKQLLMTHGTLTTFSIANDVAKYFAILPALFMGVFPQIAPLNVMGLSSPFSAVLSAVIFNALIIILLIPLALKGVRYRPLGAEALLRRSLLLYGVGGVIVPFVGIKVIDVLLGAVGLA.

The next 2 membrane-spanning stretches (helical) occupy residues 38 to 58 and 64 to 84; these read VMFV…KDLV and AAPL…VLFA. Positions 101 to 123 are disordered; that stretch reads ALRKMRKETTARRWKDGREERVP. Basic and acidic residues predominate over residues 107 to 123; sequence KETTARRWKDGREERVP. 2 helical membrane-spanning segments follow: residues 224-244 and 257-277; these read ILLV…VPLA and VALL…AIGI. D308 acts as the 4-aspartylphosphate intermediate in catalysis. ATP contacts are provided by residues D345, E349, 378–385, and K399; that span reads FTAQTRMS. Positions 522 and 526 each coordinate Mg(2+). Transmembrane regions (helical) follow at residues 592-612, 620-640, and 666-686; these read FAIL…LNVM, AVLS…PLAL, and VIVP…VGLA.

This sequence belongs to the cation transport ATPase (P-type) (TC 3.A.3) family. Type IA subfamily. The system is composed of three essential subunits: KdpA, KdpB and KdpC.

The protein localises to the cell membrane. It catalyses the reaction K(+)(out) + ATP + H2O = K(+)(in) + ADP + phosphate + H(+). Functionally, part of the high-affinity ATP-driven potassium transport (or Kdp) system, which catalyzes the hydrolysis of ATP coupled with the electrogenic transport of potassium into the cytoplasm. This subunit is responsible for energy coupling to the transport system and for the release of the potassium ions to the cytoplasm. In Myxococcus xanthus, this protein is Potassium-transporting ATPase ATP-binding subunit.